A 160-amino-acid chain; its full sequence is Glutathione peroxidase homolog BsaA (160 aa).

Cysteine 35 is an active-site residue.

This sequence belongs to the glutathione peroxidase family.

This is Glutathione peroxidase homolog BsaA (bsaA) from Bacillus subtilis (strain 168).